A 342-amino-acid polypeptide reads, in one-letter code: Glucokinase (342 aa).

Position 15–20 (15–20) interacts with ATP; that stretch reads GDVGGT.

Belongs to the bacterial glucokinase family.

The protein localises to the cytoplasm. The catalysed reaction is D-glucose + ATP = D-glucose 6-phosphate + ADP + H(+). This is Glucokinase from Ralstonia nicotianae (strain ATCC BAA-1114 / GMI1000) (Ralstonia solanacearum).